The chain runs to 431 residues: Histidine--tRNA ligase (431 aa).

It belongs to the class-II aminoacyl-tRNA synthetase family. In terms of assembly, homodimer.

The protein resides in the cytoplasm. It catalyses the reaction tRNA(His) + L-histidine + ATP = L-histidyl-tRNA(His) + AMP + diphosphate + H(+). The polypeptide is Histidine--tRNA ligase (Finegoldia magna (strain ATCC 29328 / DSM 20472 / WAL 2508) (Peptostreptococcus magnus)).